The following is a 209-amino-acid chain: Ubiquitin-conjugating enzyme E2 S (209 aa).

The 147-residue stretch at 14-160 (QTIRQVMREL…ARMMTEIHAQ (147 aa)) folds into the UBC core domain. C98 acts as the Glycyl thioester intermediate in catalysis. Positions 162–209 (AKCGAGAHGDDKDDDGPSTKKHAGLDKKLQDKKKEKLLKEKKRMLKRL) are disordered. The segment covering 169 to 199 (HGDDKDDDGPSTKKHAGLDKKLQDKKKEKLL) has biased composition (basic and acidic residues). The segment covering 200–209 (KEKKRMLKRL) has biased composition (basic residues).

Belongs to the ubiquitin-conjugating enzyme family.

It carries out the reaction S-ubiquitinyl-[E1 ubiquitin-activating enzyme]-L-cysteine + [E2 ubiquitin-conjugating enzyme]-L-cysteine = [E1 ubiquitin-activating enzyme]-L-cysteine + S-ubiquitinyl-[E2 ubiquitin-conjugating enzyme]-L-cysteine.. The protein operates within protein modification; protein ubiquitination. Its function is as follows. Catalyzes the covalent attachment of ubiquitin to other proteins. Acts as an essential factor of the anaphase promoting complex/cyclosome (APC/C), a cell cycle-regulated ubiquitin ligase that controls progression through mitosis. Acts by specifically elongating polyubiquitin chains initiated by the E2 enzyme vih/UbcH10 on APC/C substrates, enhancing the degradation of APC/C substrates by the proteasome and promoting mitotic exit. This Drosophila erecta (Fruit fly) protein is Ubiquitin-conjugating enzyme E2 S.